A 599-amino-acid polypeptide reads, in one-letter code: Elongation factor 4 (599 aa).

A tr-type G domain is found at 5–187; that stretch reads KNIRNFSIIA…QLVERIPAPE (183 aa). Residues 17–22 and 134–137 contribute to the GTP site; these read DHGKST and NKID.

It belongs to the TRAFAC class translation factor GTPase superfamily. Classic translation factor GTPase family. LepA subfamily.

It is found in the cell inner membrane. It carries out the reaction GTP + H2O = GDP + phosphate + H(+). Required for accurate and efficient protein synthesis under certain stress conditions. May act as a fidelity factor of the translation reaction, by catalyzing a one-codon backward translocation of tRNAs on improperly translocated ribosomes. Back-translocation proceeds from a post-translocation (POST) complex to a pre-translocation (PRE) complex, thus giving elongation factor G a second chance to translocate the tRNAs correctly. Binds to ribosomes in a GTP-dependent manner. The sequence is that of Elongation factor 4 from Alcanivorax borkumensis (strain ATCC 700651 / DSM 11573 / NCIMB 13689 / SK2).